An 82-amino-acid chain; its full sequence is uncharacterized protein (82 aa).

A run of 2 helical transmembrane segments spans residues 32–52 and 59–79; these read PFSI…IGIL and SKPL…FNII.

The protein localises to the cell membrane. This is an uncharacterized protein from Rickettsia prowazekii (strain Madrid E).